Reading from the N-terminus, the 139-residue chain is Small ribosomal subunit protein uS12 (139 aa).

The interval 118-139 is disordered; it reads AGVANRNQSRSRYGTKKPKPKS. The segment covering 130–139 has biased composition (basic residues); it reads YGTKKPKPKS.

It belongs to the universal ribosomal protein uS12 family. As to quaternary structure, part of the 30S ribosomal subunit. Contacts proteins S8 and S17. May interact with IF1 in the 30S initiation complex.

Its function is as follows. With S4 and S5 plays an important role in translational accuracy. Interacts with and stabilizes bases of the 16S rRNA that are involved in tRNA selection in the A site and with the mRNA backbone. Located at the interface of the 30S and 50S subunits, it traverses the body of the 30S subunit contacting proteins on the other side and probably holding the rRNA structure together. The combined cluster of proteins S8, S12 and S17 appears to hold together the shoulder and platform of the 30S subunit. This chain is Small ribosomal subunit protein uS12, found in Mycoplasma mobile (strain ATCC 43663 / 163K / NCTC 11711) (Mesomycoplasma mobile).